A 304-amino-acid polypeptide reads, in one-letter code: Olfactory receptor 8G2 (304 aa).

Topologically, residues 1–41 (MVFLSSVETDQRKMSAGNHSSVTEFILAGLSEQPELQLRLF) are extracellular. N-linked (GlcNAc...) asparagine glycosylation is present at asparagine 18. Residues 42 to 62 (LLFLGIYVVTVVGNLSMITLI) form a helical membrane-spanning segment. Over 63–69 (GLSSHLH) the chain is Cytoplasmic. A helical membrane pass occupies residues 70 to 90 (TPMYYFLSGLSFIDLCHSTII). The Extracellular segment spans residues 91-110 (TPKMLVNFVTEKNIISYPEC). A disulfide bridge links cysteine 110 with cysteine 192. A helical transmembrane segment spans residues 111–130 (MTQLYFFLIFAIAECHMLAV). Residues 131–154 (TAYDRYVAICSPLLYNVIMSYHHC) are Cytoplasmic-facing. Residues 155 to 175 (FWLTVGVYVLGILGSTIHTGF) traverse the membrane as a helical segment. Topologically, residues 176–193 (MLRLFLCKTNVINHYFCD) are extracellular. Residues 194–214 (LFPLLGLSCSSTYINELLVLV) traverse the membrane as a helical segment. The Cytoplasmic segment spans residues 215–217 (LSA). A helical transmembrane segment spans residues 218–238 (FNILTPALTILASYIFIIASI). Residues 239–257 (LRIRSTEGRSKAFSTCSSH) lie on the Extracellular side of the membrane. The helical transmembrane segment at 258-278 (ILAVAVFFGSAAFMYLQPSSV) threads the bilayer. At 279-304 (SSMDQRKVSSVFYTTIVPMLNPQSIA) the chain is on the cytoplasmic side.

Belongs to the G-protein coupled receptor 1 family.

The protein localises to the cell membrane. In terms of biological role, odorant receptor. In Homo sapiens (Human), this protein is Olfactory receptor 8G2.